We begin with the raw amino-acid sequence, 392 residues long: L-rhamnonate dehydratase (392 aa).

Substrate-binding residues include histidine 22 and arginine 48. Mg(2+) is bound by residues aspartate 214, glutamate 240, and glutamate 268. Histidine 318 serves as the catalytic Proton acceptor. Residue glutamate 338 coordinates substrate.

This sequence belongs to the mandelate racemase/muconate lactonizing enzyme family. RhamD subfamily. In terms of assembly, homooctamer; tetramer of dimers. Requires Mg(2+) as cofactor.

It catalyses the reaction L-rhamnonate = 2-dehydro-3-deoxy-L-rhamnonate + H2O. Catalyzes the dehydration of L-rhamnonate to 2-keto-3-deoxy-L-rhamnonate (KDR). The protein is L-rhamnonate dehydratase of Burkholderia cenocepacia (strain HI2424).